A 299-amino-acid polypeptide reads, in one-letter code: Delta-9 desaturase-like 2 protein (299 aa).

A helical membrane pass occupies residues 55 to 75 (WEAFRFGIILAILTNLCITFS). The Histidine box-1 signature appears at 77–82 (HRNLTH). The short motif at 114–118 (HRFHH) is the Histidine box-2 element. Residues 174–194 (LVLHILAFWTLIYLWGGLPYL) form a helical membrane-spanning segment. Positions 246–250 (HNNHH) match the Histidine box-3 motif. The chain crosses the membrane as a helical span at residues 262-282 (WYQLDITWYLIWFFQALGLAT).

This sequence belongs to the fatty acid desaturase type 1 family. It depends on Fe cation as a cofactor.

The protein resides in the endoplasmic reticulum membrane. It participates in lipid metabolism; polyunsaturated fatty acid biosynthesis. The chain is Delta-9 desaturase-like 2 protein from Arabidopsis thaliana (Mouse-ear cress).